We begin with the raw amino-acid sequence, 161 residues long: MQCPHCQHHNSRVLESRSSEGGQSIRRRRECLECKHRFTTYERLELLPVTVIKQDGERQAFDRSKLLRGMVRACEKTDINFQRLEHIVEEIEANLQQQPKREIHSEAIGQMVLQYLRQESEVAYIRFASVYGRFQGIADFVDTLEQLQREQYPERQYLTMT.

Over residues 1–11 (MQCPHCQHHNS) the composition is skewed to basic residues. The interval 1–21 (MQCPHCQHHNSRVLESRSSEG) is disordered. Residues 3-34 (CPHCQHHNSRVLESRSSEGGQSIRRRRECLEC) fold into a zinc finger. An ATP-cone domain is found at 49 to 139 (VTVIKQDGER…VYGRFQGIAD (91 aa)).

This sequence belongs to the NrdR family. Requires Zn(2+) as cofactor.

In terms of biological role, negatively regulates transcription of bacterial ribonucleotide reductase nrd genes and operons by binding to NrdR-boxes. The sequence is that of Transcriptional repressor NrdR from Synechocystis sp. (strain ATCC 27184 / PCC 6803 / Kazusa).